The primary structure comprises 123 residues: CD59 glycoprotein (123 aa).

The signal sequence occupies residues methionine 1–serine 25. In terms of domain architecture, UPAR/Ly6 spans leucine 26 to serine 103. 5 disulfide bridges follow: cysteine 28–cysteine 51, cysteine 31–cysteine 38, cysteine 44–cysteine 65, cysteine 71–cysteine 89, and cysteine 90–cysteine 95. Asparagine 43 carries an N-linked (GlcNAc...) asparagine glycan. Serine 98 carries GPI-anchor amidated serine lipidation. Residues aspartate 99–leucine 123 constitute a propeptide, removed in mature form.

In terms of assembly, interacts with T-cell surface antigen CD2. In terms of processing, N- and O-glycosylated. Expressed in all tissues tested (lung, testis liver, kidney, spleen, heart and skeletal muscle). Highest levels in lung and spleen, lowest levels in liver and skeletal muscle.

The protein resides in the cell membrane. Its subcellular location is the secreted. Its function is as follows. Potent inhibitor of the complement membrane attack complex (MAC) action, which protects self-cells from damage during complement activation. Acts by binding to the beta-haipins of C8 (C8A and C8B) components of the assembling MAC, forming an intermolecular beta-sheet that prevents incorporation of the multiple copies of C9 required for complete formation of the osmolytic pore. This chain is CD59 glycoprotein, found in Sus scrofa (Pig).